A 198-amino-acid polypeptide reads, in one-letter code: FMN-dependent NADH:quinone oxidoreductase (198 aa).

Residue 92–95 (MWNL) coordinates FMN.

The protein belongs to the azoreductase type 1 family. As to quaternary structure, homodimer. The cofactor is FMN.

It carries out the reaction 2 a quinone + NADH + H(+) = 2 a 1,4-benzosemiquinone + NAD(+). The catalysed reaction is N,N-dimethyl-1,4-phenylenediamine + anthranilate + 2 NAD(+) = 2-(4-dimethylaminophenyl)diazenylbenzoate + 2 NADH + 2 H(+). Functionally, quinone reductase that provides resistance to thiol-specific stress caused by electrophilic quinones. Also exhibits azoreductase activity. Catalyzes the reductive cleavage of the azo bond in aromatic azo compounds to the corresponding amines. The polypeptide is FMN-dependent NADH:quinone oxidoreductase (Lachnoclostridium phytofermentans (strain ATCC 700394 / DSM 18823 / ISDg) (Clostridium phytofermentans)).